The sequence spans 387 residues: Protein kinase gsk3 (387 aa).

The Protein kinase domain maps to 32 to 316 (YTSSKVVGSG…AAEAMCHPFF (285 aa)). Residues 38–46 (VGSGSFGVV) and Lys61 contribute to the ATP site. Asp157 serves as the catalytic Proton acceptor. The residue at position 191 (Ser191) is a Phosphoserine. Tyr192 is subject to Phosphotyrosine; by autocatalysis. The residue at position 335 (Ser335) is a Phosphoserine.

The protein belongs to the protein kinase superfamily. CMGC Ser/Thr protein kinase family. GSK-3 subfamily. Post-translationally, autophosphorylated on tyrosine residues.

Its subcellular location is the cytoplasm. It localises to the nucleus. It carries out the reaction L-seryl-[protein] + ATP = O-phospho-L-seryl-[protein] + ADP + H(+). The enzyme catalyses L-threonyl-[protein] + ATP = O-phospho-L-threonyl-[protein] + ADP + H(+). In terms of biological role, interacts with cdc14 which is thought to play a role in the initiation and completion of mitosis. Involved in the positive regulation of mis12. This Schizosaccharomyces pombe (strain 972 / ATCC 24843) (Fission yeast) protein is Protein kinase gsk3 (gsk3).